The sequence spans 400 residues: Jasmonate-induced oxygenase 1 (400 aa).

Residues aspartate 248 to proline 349 form the Fe2OG dioxygenase domain. Arginine 254 is a binding site for jasmonate. Residues asparagine 256 and tyrosine 258 each contribute to the 2-oxoglutarate site. Fe cation is bound by residues histidine 273, aspartate 275, and histidine 330. Positions 340 and 342 each coordinate 2-oxoglutarate. Residues arginine 379 and arginine 383 each coordinate jasmonate.

This sequence belongs to the iron/ascorbate-dependent oxidoreductase family. L-ascorbate serves as cofactor. Requires Fe(2+) as cofactor.

It carries out the reaction jasmonate + 2-oxoglutarate + O2 = (1R,2R)-12-hydroxyjasmonate + succinate + CO2. In terms of biological role, 2-oxoglutarate-dependent dioxygenase involved in the oxidation of jasmonate (JA), a stress-induced phytohormone synthesized in response to attack by pathogens and herbivores, which triggers the activation of defense responses via the JA-mediated signaling pathway. Converts JA to 12-hydroxyjasmonate (12OH-JA), an inactive form of JA. Prevents over-accumulation of JA and indirectly its bioactive form JA-Ile under stress response. Acts as a negative regulator of JA-mediated defense signaling, by contributing to 12OH-JA accumulation, which represses JA defense responses upon infection by the fungal pathogen Botrytis cinerea and the herbivorous caterpillar Mamestra brassicae. The protein is Jasmonate-induced oxygenase 1 of Arabidopsis thaliana (Mouse-ear cress).